A 121-amino-acid chain; its full sequence is UPF0145 protein SGR_4080 (121 aa).

It belongs to the UPF0145 family.

This chain is UPF0145 protein SGR_4080, found in Streptomyces griseus subsp. griseus (strain JCM 4626 / CBS 651.72 / NBRC 13350 / KCC S-0626 / ISP 5235).